The primary structure comprises 360 residues: UDP-3-O-acylglucosamine N-acyltransferase (360 aa).

Histidine 253 acts as the Proton acceptor in catalysis.

This sequence belongs to the transferase hexapeptide repeat family. LpxD subfamily. In terms of assembly, homotrimer.

The enzyme catalyses a UDP-3-O-[(3R)-3-hydroxyacyl]-alpha-D-glucosamine + a (3R)-hydroxyacyl-[ACP] = a UDP-2-N,3-O-bis[(3R)-3-hydroxyacyl]-alpha-D-glucosamine + holo-[ACP] + H(+). It functions in the pathway bacterial outer membrane biogenesis; LPS lipid A biosynthesis. Catalyzes the N-acylation of UDP-3-O-acylglucosamine using 3-hydroxyacyl-ACP as the acyl donor. Is involved in the biosynthesis of lipid A, a phosphorylated glycolipid that anchors the lipopolysaccharide to the outer membrane of the cell. This is UDP-3-O-acylglucosamine N-acyltransferase from Burkholderia multivorans (strain ATCC 17616 / 249).